Reading from the N-terminus, the 212-residue chain is Pyrrolidone-carboxylate peptidase (212 aa).

Active-site residues include Glu-80, Cys-143, and His-165.

It belongs to the peptidase C15 family. In terms of assembly, homotetramer.

Its subcellular location is the cytoplasm. It catalyses the reaction Release of an N-terminal pyroglutamyl group from a polypeptide, the second amino acid generally not being Pro.. Functionally, removes 5-oxoproline from various penultimate amino acid residues except L-proline. The sequence is that of Pyrrolidone-carboxylate peptidase from Vibrio parahaemolyticus serotype O3:K6 (strain RIMD 2210633).